Here is a 934-residue protein sequence, read N- to C-terminus: Bifunctional uridylyltransferase/uridylyl-removing enzyme (934 aa).

The interval 1–379 (MSAHDLKLEE…TFSRRKRKLS (379 aa)) is uridylyltransferase. The interval 380–736 (ADGDFVSENH…AKPHTFEAVT (357 aa)) is uridylyl-removing. The HD domain maps to 496-613 (VDEHLLRCIA…IDFADTVQTM (118 aa)). ACT domains are found at residues 737–819 (EITV…VLAK) and 848–931 (VIEV…RSSQ).

The protein belongs to the GlnD family. Requires Mg(2+) as cofactor.

The catalysed reaction is [protein-PII]-L-tyrosine + UTP = [protein-PII]-uridylyl-L-tyrosine + diphosphate. The enzyme catalyses [protein-PII]-uridylyl-L-tyrosine + H2O = [protein-PII]-L-tyrosine + UMP + H(+). Its activity is regulated as follows. Uridylyltransferase (UTase) activity is inhibited by glutamine, while glutamine activates uridylyl-removing (UR) activity. Modifies, by uridylylation and deuridylylation, the PII regulatory proteins (GlnB and homologs), in response to the nitrogen status of the cell that GlnD senses through the glutamine level. Under low glutamine levels, catalyzes the conversion of the PII proteins and UTP to PII-UMP and PPi, while under higher glutamine levels, GlnD hydrolyzes PII-UMP to PII and UMP (deuridylylation). Thus, controls uridylylation state and activity of the PII proteins, and plays an important role in the regulation of nitrogen assimilation and metabolism. In Brucella anthropi (strain ATCC 49188 / DSM 6882 / CCUG 24695 / JCM 21032 / LMG 3331 / NBRC 15819 / NCTC 12168 / Alc 37) (Ochrobactrum anthropi), this protein is Bifunctional uridylyltransferase/uridylyl-removing enzyme.